The chain runs to 188 residues: UPF0157 protein VC_A0354 (188 aa).

Belongs to the UPF0157 (GrpB) family.

This Vibrio cholerae serotype O1 (strain ATCC 39315 / El Tor Inaba N16961) protein is UPF0157 protein VC_A0354.